Here is a 719-residue protein sequence, read N- to C-terminus: CRAL-TRIO domain-containing protein T23G5.2 (719 aa).

Positions 2-175 constitute a PRELI/MSF1 domain; sequence VQTYRSPVRI…FIEELLKKTT (174 aa). The CRAL-TRIO domain maps to 319 to 495; it reads RPTVIKQYFP…FLGGSCLTTN (177 aa). The region spanning 524–681 is the GOLD domain; it reads HSTYTSTATW…KCRLIYYYEI (158 aa). The segment at 700–719 is disordered; it reads SSFSSIAPPTPPTPGTPRNP. Residues 707–719 are compositionally biased toward pro residues; the sequence is PPTPPTPGTPRNP.

In Caenorhabditis elegans, this protein is CRAL-TRIO domain-containing protein T23G5.2.